We begin with the raw amino-acid sequence, 93 residues long: Small ribosomal subunit protein bS16 (93 aa).

The protein belongs to the bacterial ribosomal protein bS16 family.

This is Small ribosomal subunit protein bS16 from Dictyoglomus thermophilum (strain ATCC 35947 / DSM 3960 / H-6-12).